The sequence spans 382 residues: Sphingoid long-chain base transporter RSB1 (382 aa).

Residues 1 to 34 (MSNATNNTLGSLLPQLEAAANSNSLYGGMVPNLR) lie on the Extracellular side of the membrane. N-linked (GlcNAc...) asparagine glycosylation is found at Asn-3 and Asn-6. The chain crosses the membrane as a helical span at residues 35-55 (FNITMIVIWGILLTIHVVQLL). Over 56 to 57 (MR) the chain is Cytoplasmic. A helical membrane pass occupies residues 58–78 (QYWFSIAFICTGILEVLGFIG). The Extracellular segment spans residues 79-90 (RTWSHSNVADMD). A helical membrane pass occupies residues 91–111 (AFLLNMICLTIAPVFTMGGIY). The Cytoplasmic segment spans residues 112-135 (YQLAKLIEVYGHRFSLLPSPMAYS). Residues 136 to 156 (FIFICSDIVSLVVQAVGGGLC) form a helical membrane-spanning segment. Residues 157 to 171 (GVAVTDGTSTTTGNH) lie on the Extracellular side of the membrane. A helical transmembrane segment spans residues 172–192 (VFIAGLAIQVASMAIFLMLWF). The Cytoplasmic portion of the chain corresponds to 193–241 (HFLFRIYISVRWEHINSRPISLSLLKISQTEVDYLYREKFHFLRLEPKR). The helical transmembrane segment at 242 to 262 (WVFHYFNLAMTVAVLTIFTRC) threads the bilayer. Residues 263–281 (CYRLAELVVGWDGYLITHE) lie on the Extracellular side of the membrane. A helical membrane pass occupies residues 282-302 (WYFIILDALMMAIATVTLTIF). The Cytoplasmic segment spans residues 303-382 (HPGFAFKGRS…LFSSKKKAKL (80 aa)).

It belongs to the lipid-translocating exporter (LTE) (TC 9.A.26.1) family.

It localises to the cell membrane. Its function is as follows. Catalyzes the ATP-dependent translocation of sphingoid long-chain bases (LCBs) from the cytoplasmic site toward the extracytoplasmic side of the membrane (flip-flop). Involved in the establishment of the functional lipid asymmetry of the plasma membrane. Regulates intracellular levels of LCBs, sphingolipid precursors that are growth inhibitory at increased levels. The polypeptide is Sphingoid long-chain base transporter RSB1 (RSB1) (Saccharomyces cerevisiae (strain RM11-1a) (Baker's yeast)).